The chain runs to 66 residues: Large ribosomal subunit protein bL35 (66 aa).

Over residues 1–46 (MPKMKTHRASAKRFKRTGNGGLKRHHAFTGHRFHGKTKKQRRHLRK) the composition is skewed to basic residues. The segment at 1 to 50 (MPKMKTHRASAKRFKRTGNGGLKRHHAFTGHRFHGKTKKQRRHLRKAAMV) is disordered.

This sequence belongs to the bacterial ribosomal protein bL35 family.

This chain is Large ribosomal subunit protein bL35, found in Lactobacillus delbrueckii subsp. bulgaricus (strain ATCC 11842 / DSM 20081 / BCRC 10696 / JCM 1002 / NBRC 13953 / NCIMB 11778 / NCTC 12712 / WDCM 00102 / Lb 14).